A 321-amino-acid chain; its full sequence is Cytochrome c biogenesis protein CcsA (321 aa).

7 helical membrane passes run 9–29 (ILTH…LITL), 44–64 (GMIA…ASSG), 68–88 (LSNL…LHMI), 143–163 (MLLS…LLMI), 226–246 (VISL…VWAN), 260–274 (TWAF…IYLH), and 289–309 (VASI…LLGI).

The protein belongs to the CcmF/CycK/Ccl1/NrfE/CcsA family. As to quaternary structure, may interact with Ccs1.

It localises to the plastid. The protein localises to the chloroplast thylakoid membrane. In terms of biological role, required during biogenesis of c-type cytochromes (cytochrome c6 and cytochrome f) at the step of heme attachment. The protein is Cytochrome c biogenesis protein CcsA of Oryza sativa (Rice).